Reading from the N-terminus, the 117-residue chain is Small ribosomal subunit protein bS6 (117 aa).

The tract at residues 92-117 (KVDEHPEGPSIQMQKREERDNRRERR) is disordered. Residues 105–117 (QKREERDNRRERR) are compositionally biased toward basic and acidic residues.

This sequence belongs to the bacterial ribosomal protein bS6 family.

Its function is as follows. Binds together with bS18 to 16S ribosomal RNA. The protein is Small ribosomal subunit protein bS6 of Dinoroseobacter shibae (strain DSM 16493 / NCIMB 14021 / DFL 12).